The chain runs to 515 residues: N-fatty-acyl-amino acid synthase/hydrolase PM20D1.1 (515 aa).

The N-terminal stretch at 1–34 (MKTKFTKKTVLKFFGILFAILLLSVLILFSVVIG) is a signal peptide. N-linked (GlcNAc...) asparagine glycans are attached at residues asparagine 50, asparagine 87, and asparagine 118. Zn(2+) is bound at residue histidine 140. Aspartate 142 is an active-site residue. Aspartate 173 contacts Zn(2+). Glutamate 207 acts as the Proton acceptor in catalysis. Zn(2+)-binding residues include glutamate 208, aspartate 234, and histidine 480.

It belongs to the peptidase M20A family. Zn(2+) is required as a cofactor.

The protein resides in the secreted. The catalysed reaction is an N-acyl-L-amino acid + H2O = an L-alpha-amino acid + a carboxylate. It catalyses the reaction an N-acyl-aromatic L-alpha-amino acid + H2O = an aromatic L-alpha-amino acid + a carboxylate. The enzyme catalyses N-(5Z,8Z,11Z,14Z)-eicosatetraenoyl-glycine + H2O = (5Z,8Z,11Z,14Z)-eicosatetraenoate + glycine. It carries out the reaction N-hexadecanoyl-L-phenylalanine + H2O = hexadecanoate + L-phenylalanine. The catalysed reaction is N-octadecanoyl-L-phenylalanine + H2O = octadecanoate + L-phenylalanine. It catalyses the reaction N-(4Z,7Z,10Z,13Z,16Z,19Z-docosahexaenoyl)-L-phenylalanine + H2O = (4Z,7Z,10Z,13Z,16Z,19Z)-docosahexaenoate + L-phenylalanine. The enzyme catalyses N-(9Z-octadecenoyl)-L-asparagine + H2O = L-asparagine + (9Z)-octadecenoate. It carries out the reaction (9Z)-octadecenoate + glycine = N-(9Z-octadecenoyl)glycine + H2O. The catalysed reaction is N-(9Z-octadecenoyl)-L-lysine + H2O = L-lysine + (9Z)-octadecenoate. It catalyses the reaction N-(9Z-octadecenoyl)-L-methionine + H2O = (9Z)-octadecenoate + L-methionine. The enzyme catalyses N-(9Z-octadecenoyl)-L-serine + H2O = L-serine + (9Z)-octadecenoate. It carries out the reaction N-(9Z-octadecenoyl)-L-tryptophan + H2O = L-tryptophan + (9Z)-octadecenoate. The catalysed reaction is N-(9Z-octadecenoyl)-L-tyrosine + H2O = L-tyrosine + (9Z)-octadecenoate. It catalyses the reaction N-(9Z-octadecenoyl)-L-glutamine + H2O = L-glutamine + (9Z)-octadecenoate. The enzyme catalyses N-(5Z,8Z,11Z,14Z-eicosatetraenoyl)-L-serine + H2O = (5Z,8Z,11Z,14Z)-eicosatetraenoate + L-serine. It carries out the reaction (5Z,8Z,11Z,14Z)-eicosatetraenoate + L-phenylalanine = N-(5Z,8Z,11Z,14Z-eicosatetraenoyl)-L-phenylalanine + H2O. The catalysed reaction is N-(9Z-octadecenoyl)-L-leucine + H2O = L-leucine + (9Z)-octadecenoate. It catalyses the reaction L-phenylalanine + (9Z)-octadecenoate = N-(9Z-octadecenoyl)-L-phenylalanine + H2O. It functions in the pathway amino-acid metabolism. Its pathway is energy metabolism; electron transfer. It participates in lipid metabolism; fatty acid metabolism. Its activity is regulated as follows. Lipoproteins are powerful coactivators of PM20D1 activity in vitro and NAA biosynthesis in vivo. Its function is as follows. Secreted enzyme that regulates the endogenous N-fatty acyl amino acid (NAAs) tissue and circulating levels by functioning as a bidirectional NAA synthase/hydrolase. It condenses free fatty acids and free amino acids to generate NAAs and bidirectionally catalyzes the reverse hydrolysis reaction. Some of these NAAs stimulate oxidative metabolism via mitochondrial uncoupling, increasing energy expenditure in a UPC1-independent manner. Thereby, this secreted protein may indirectly regulate whole body energy expenditure. PM20D1 circulates in tight association with both low- and high-density (LDL and HDL,respectively) lipoprotein particles. The protein is N-fatty-acyl-amino acid synthase/hydrolase PM20D1.1 of Danio rerio (Zebrafish).